A 659-amino-acid chain; its full sequence is Replication protein E1 (659 aa).

Residues 30–57 (RTGDTVSSDEDEEEDGGEDLVDFIDDRP) are disordered. Over residues 36 to 52 (SSDEDEEEDGGEDLVDF) the composition is skewed to acidic residues. The Nuclear localization signal motif lies at 85 to 87 (KRK). Phosphoserine; by host occurs at positions 91, 95, 108, and 121. A Nuclear export signal motif is present at residues 107-116 (LSPRLDAIKL). The disordered stretch occupies residues 134–195 (GYGQTQVDTE…DGEESQTESV (62 aa)). The span at 135–160 (YGQTQVDTESGPKQVQDICKTSQQDG) shows a compositional bias: polar residues. The DNA-binding region stretch occupies residues 196–362 (QTDTTACGVL…QTVVGHALEE (167 aa)). The region spanning 461–611 (VEFIPFLCAL…FPLTTQGEPL (151 aa)) is the SF3 helicase domain. 487–494 (GPADTGKS) is a binding site for ATP. Lysine 568 is covalently cross-linked (Glycyl lysine isopeptide (Lys-Gly) (interchain with G-Cter in SUMO)). Residues 634–659 (DPEDEEDNGNTSEPFRCVPGQNTRTV) are disordered.

Belongs to the papillomaviridae E1 protein family. In terms of assembly, can form hexamers. Interacts with E2 protein; this interaction increases E1 DNA binding specificity. Interacts with host DNA polymerase subunit POLA2. Interacts with host single stranded DNA-binding protein RPA1. Interacts with host TOP1; this interaction stimulates the enzymatic activity of TOP1. Phosphorylated. Post-translationally, sumoylated.

The protein localises to the host nucleus. It catalyses the reaction Couples ATP hydrolysis with the unwinding of duplex DNA by translocating in the 3'-5' direction.. It carries out the reaction ATP + H2O = ADP + phosphate + H(+). Functionally, ATP-dependent DNA 3'-5' helicase required for initiation of viral DNA replication. It forms a complex with the viral E2 protein. The E1-E2 complex binds to the replication origin which contains binding sites for both proteins. During the initial step, a dimer of E1 interacts with a dimer of protein E2 leading to a complex that binds the viral origin of replication with high specificity. Then, a second dimer of E1 displaces the E2 dimer in an ATP-dependent manner to form the E1 tetramer. Following this, two E1 monomers are added to each half of the site, which results in the formation of two E1 trimers on the viral ori. Subsequently, two hexamers will be created. The double hexamer acts as a bi-directional helicase machinery and unwinds the viral DNA and then recruits the host DNA polymerase to start replication. This Homo sapiens (Human) protein is Replication protein E1.